Reading from the N-terminus, the 444-residue chain is Putative cytochrome P450 120 (444 aa).

Heme is bound at residue cysteine 391.

It belongs to the cytochrome P450 family. The cofactor is heme.

The protein is Putative cytochrome P450 120 (cyp120) of Synechocystis sp. (strain ATCC 27184 / PCC 6803 / Kazusa).